The primary structure comprises 459 residues: Bifunctional protein GlmU (459 aa).

Residues 1 to 230 (MSNRFAVILA…FDETLGVNDR (230 aa)) form a pyrophosphorylase region. UDP-N-acetyl-alpha-D-glucosamine is bound by residues 9-12 (LAAG), Lys23, Gln73, and 78-79 (GT). Asp103 is a binding site for Mg(2+). The UDP-N-acetyl-alpha-D-glucosamine site is built by Gly140, Glu155, Asn170, and Asn228. Asn228 is a binding site for Mg(2+). The tract at residues 231–251 (VALSQAEIIMKNRINRKNMVN) is linker. The interval 252–459 (GVTIIDPSNT…VDQLLNKKKS (208 aa)) is N-acetyltransferase. UDP-N-acetyl-alpha-D-glucosamine-binding residues include Arg333 and Lys351. Catalysis depends on His363, which acts as the Proton acceptor. Residues Tyr366 and Asn377 each coordinate UDP-N-acetyl-alpha-D-glucosamine. Acetyl-CoA-binding positions include 386 to 387 (NY), Ala423, and Arg440.

It in the N-terminal section; belongs to the N-acetylglucosamine-1-phosphate uridyltransferase family. In the C-terminal section; belongs to the transferase hexapeptide repeat family. In terms of assembly, homotrimer. It depends on Mg(2+) as a cofactor.

Its subcellular location is the cytoplasm. It catalyses the reaction alpha-D-glucosamine 1-phosphate + acetyl-CoA = N-acetyl-alpha-D-glucosamine 1-phosphate + CoA + H(+). The catalysed reaction is N-acetyl-alpha-D-glucosamine 1-phosphate + UTP + H(+) = UDP-N-acetyl-alpha-D-glucosamine + diphosphate. It functions in the pathway nucleotide-sugar biosynthesis; UDP-N-acetyl-alpha-D-glucosamine biosynthesis; N-acetyl-alpha-D-glucosamine 1-phosphate from alpha-D-glucosamine 6-phosphate (route II): step 2/2. The protein operates within nucleotide-sugar biosynthesis; UDP-N-acetyl-alpha-D-glucosamine biosynthesis; UDP-N-acetyl-alpha-D-glucosamine from N-acetyl-alpha-D-glucosamine 1-phosphate: step 1/1. It participates in bacterial outer membrane biogenesis; LPS lipid A biosynthesis. Its function is as follows. Catalyzes the last two sequential reactions in the de novo biosynthetic pathway for UDP-N-acetylglucosamine (UDP-GlcNAc). The C-terminal domain catalyzes the transfer of acetyl group from acetyl coenzyme A to glucosamine-1-phosphate (GlcN-1-P) to produce N-acetylglucosamine-1-phosphate (GlcNAc-1-P), which is converted into UDP-GlcNAc by the transfer of uridine 5-monophosphate (from uridine 5-triphosphate), a reaction catalyzed by the N-terminal domain. This Bacillus cereus (strain ZK / E33L) protein is Bifunctional protein GlmU.